Reading from the N-terminus, the 752-residue chain is MAP/microtubule affinity-regulating kinase 4 (752 aa).

Residues 1-36 form a disordered region; the sequence is MSSRTALAPGNDRNSDTHGTLGSGRSSDKGPSWSSR. The region spanning 59 to 310 is the Protein kinase domain; the sequence is YRLLRTIGKG…LEQIMKDKWI (252 aa). Residues 65–73 and Lys-88 each bind ATP; that span reads IGKGNFAKV. Catalysis depends on Asp-181, which acts as the Proton acceptor. At Thr-214 the chain carries Phosphothreonine; by LKB1. Residues 324 to 368 form the UBA domain; it reads EPEEDFGDTKRIEVMVGMGYTREEIKEALTNQKYNEVTATYLLLG. Positions 385–615 are disordered; the sequence is ARVRAPSDTT…SGRPRPTTNL (231 aa). Positions 391–406 are enriched in low complexity; it reads SDTTNGTSSSKGSSHN. A phosphoserine mark is found at Ser-423 and Ser-543. Over residues 544 to 553 the composition is skewed to low complexity; that stretch reads PSSHSLAPPS. One can recognise a KA1 domain in the interval 703–752; sequence AGGPEPLSHFEVEVCQLPRPGLRGVLFRRVAGTALAFRTLVTRISNDLEL.

It belongs to the protein kinase superfamily. CAMK Ser/Thr protein kinase family. SNF1 subfamily. Interacts with MAPT/TAU. Interacts with gamma-tubulin. Interacts with ODF2. Interacts with USP9X. Interacts with YWHAQ. Interacts with NLRP3; promoting NLRP3 recruitment to microtubule organizing center (MTOC). Mg(2+) serves as cofactor. In terms of processing, ubiquitinated with 'Lys-29'- and 'Lys-33'-linked polyubiquitins which appear to impede LKB1-mediated phosphorylation. Deubiquitinated by USP9X. Phosphorylated at Thr-214 by STK11/LKB1 in complex with STE20-related adapter-alpha (STRADA) pseudo kinase and CAB39. Phosphorylated throughout the cell cycle. In terms of tissue distribution, isoform 1 and isoform 2 show similar expression patterns in the central nervous system and are present in the same subsets of neurons including pyramidal and non-pyramidal neurons in the cerebral cortex and hippocampus, cerebellar Purkinje cells, and interneurons and motor neurons in the spinal cord but not in glial cells (at protein level). Isoform 2 is the major isoform in brain and cerebellum. Also expressed in spleen, liver, small intestine, colon, kidney, tongue, testis and lung. Isoform 1 and isoform 2 are expressed at similar levels in heart.

Its subcellular location is the cytoplasm. It localises to the cytoskeleton. The protein resides in the microtubule organizing center. It is found in the centrosome. The protein localises to the cilium axoneme. Its subcellular location is the cilium basal body. It localises to the cell projection. The protein resides in the dendrite. It catalyses the reaction L-seryl-[protein] + ATP = O-phospho-L-seryl-[protein] + ADP + H(+). The enzyme catalyses L-threonyl-[protein] + ATP = O-phospho-L-threonyl-[protein] + ADP + H(+). With respect to regulation, activated by phosphorylation on Thr-214. Functionally, serine/threonine-protein kinase. Phosphorylates the microtubule-associated protein MAPT/TAU. Also phosphorylates the microtubule-associated proteins MAP2 and MAP4. Involved in regulation of the microtubule network, causing reorganization of microtubules into bundles. Required for the initiation of axoneme extension during cilium assembly. Regulates the centrosomal location of ODF2 and phosphorylates ODF2 in vitro. Plays a role in cell cycle progression, specifically in the G1/S checkpoint. Reduces neuronal cell survival. Plays a role in energy homeostasis by regulating satiety and metabolic rate. Promotes adipogenesis by activating JNK1 and inhibiting the p38MAPK pathway, and triggers apoptosis by activating the JNK1 pathway. Phosphorylates mTORC1 complex member RPTOR and acts as a negative regulator of the mTORC1 complex, probably due to disruption of the interaction between phosphorylated RPTOR and the RRAGA/RRAGC heterodimer which is required for mTORC1 activation. Involved in NLRP3 positioning along microtubules by mediating NLRP3 recruitment to microtubule organizing center (MTOC) upon inflammasome activation. The chain is MAP/microtubule affinity-regulating kinase 4 from Mus musculus (Mouse).